The following is a 539-amino-acid chain: Oviduct-specific glycoprotein (539 aa).

An N-terminal signal peptide occupies residues 1–21; that stretch reads MGKLLLWVGLLLMLKHHDGAA. The region spanning 22–385 is the GH18 domain; sequence HKLVCYFTNW…HTLNNLLVND (364 aa). Cys-26 and Cys-51 are oxidised to a cystine. Residues 71–72, 98–101, Tyr-142, 211–214, and Trp-355 each bind chitin; these read PL, GGWN, and LSYD. An N-linked (GlcNAc...) asparagine glycan is attached at Asn-402. 2 disordered regions span residues 433–480 and 503–539; these read TETH…KPLT and QKVT…LERL. Residues 440–457 show a composition bias toward low complexity; sequence ATMTTTPRGETATPTRTP.

Belongs to the glycosyl hydrolase 18 family. In terms of tissue distribution, oviduct.

Its subcellular location is the cytoplasmic vesicle. The protein localises to the secretory vesicle. Binds to oocyte zona pellucida in vivo. May play a role in the fertilization process and/or early embryonic development. In Ovis aries (Sheep), this protein is Oviduct-specific glycoprotein (OVGP1).